We begin with the raw amino-acid sequence, 341 residues long: MSVYTTAQLLAVNEKKFKFDPLFLRIFFRETYPFSTEKVYLSQIPGLVNMALYVSPIVSGKVIRSRGGSTSEFTPGYVKPKHEVNPLMTLRRLPDEDPQNLADPVYRRRRIILQNMKDEELAIAQVEEKQAVAAVLSGKYTMTGEAFEPVEVDMGRSAGNNIVQAGAAAWSSRDKETYDPTDDIEAYALNASGVVNIIVFDPKGWALFRSFKAVKEKLDTRRGSNSELETALKDLGKAVSYKGMYGDVAIVVYSGQYIENDVKKNYLPDLTMVLGNTQARGLRTYGCILDADAQREGINASTRYPKNWVQTGDPAREFTMIQSAPLMLLADPDEFVSVKLA.

Residues R109 to K129 are a coiled coil.

The protein belongs to the lambda phage major capsid protein family. Homomultimer.

The protein localises to the virion. The protein resides in the host cytoplasm. Functionally, assembles to form an icosahedral capsid with a T=7 symmetry. The icosahedral capsid is about 60 nm in diameter and composed of 415 major capsid proteins. The assembly is primed by the interaction between capsid assembly protease and portal dodecamer, and major capsid proteins assemble cooperatively to form the procapsid with the help of capsid scaffolding protein. Major capsid protein forms hexons and pentons of the icosahedron. Viral genomic DNA is packaged into the procapsid through the portal vertex. The packaging triggers a dramatic reconfiguration of the capsid shell. This is Major capsid protein from Escherichia coli (Bacteriophage N15).